A 149-amino-acid chain; its full sequence is UPF0336 protein CMM_2793 (149 aa).

Residues 16–117 (APYLVGREKV…TVTKVATLGG (102 aa)) enclose the MaoC-like domain.

This sequence belongs to the UPF0336 family.

The protein is UPF0336 protein CMM_2793 of Clavibacter michiganensis subsp. michiganensis (strain NCPPB 382).